Here is a 674-residue protein sequence, read N- to C-terminus: Kelch repeat and BTB domain-containing protein 6 (674 aa).

Residues 1–28 form a disordered region; sequence MQSREDAPRSRRLASPRGGKRPKKIHKP. The segment covering 10-27 has biased composition (basic residues); the sequence is SRRLASPRGGKRPKKIHK. A BTB domain is found at 63–138; the sequence is CDVTIEVVTP…CYTGRVSLSE (76 aa). Kelch repeat units follow at residues 386–435, 436–484, 486–523, 524–564, 567–616, and 642–673; these read AVCI…YLNG, YIYI…VIRD, LYALNSKRMFCYDPSHNMWLKCVSLKRNDFQEACVFNE, EIYC…IIKH, KLLL…CLSA, and TEWDLGGFSEPDSESGSSSSLSDDDFWVRVAP. Residues 631 to 674 form a disordered region; that stretch reads TEEEEIPSESSTEWDLGGFSEPDSESGSSSSLSDDDFWVRVAPQ. An ATG8 interaction motif (AIM) motif is present at residues 668 to 671; sequence WVRV.

As to quaternary structure, core component of a BCR3 (BTB-CUL3-RBX1) E3 ubiquitin ligase complex, also named Cul3-RING ubiquitin ligase complex CUL3(KBTBD6/7), composed of CUL3, RBX1, KBTBD6 and KBTBD7. Interacts with GABARAP; the interaction is direct and is required for the ubiquitination of TIAM1. Interacts with GABARAPL1, GABARAPL2 and MAP1LC3B; the interaction is direct.

It is found in the cytoplasm. Its subcellular location is the nucleus. Its pathway is protein modification; protein ubiquitination. In terms of biological role, as part of the CUL3(KBTBD6/7) E3 ubiquitin ligase complex functions as a substrate adapter for the RAC1 guanine exchange factor (GEF) TIAM1, mediating its 'Lys-48' ubiquitination and proteasomal degradation. By controlling this ubiquitination, regulates RAC1 signal transduction and downstream biological processes including the organization of the cytoskeleton, cell migration and cell proliferation. Ubiquitination of TIAM1 requires the membrane-associated protein GABARAP which may restrict locally the activity of the complex. The protein is Kelch repeat and BTB domain-containing protein 6 of Homo sapiens (Human).